We begin with the raw amino-acid sequence, 768 residues long: Probable dipeptidyl peptidase 4 (768 aa).

The signal sequence occupies residues 1-17 (MKLGKWSVLLLVGCTAA). N-linked (GlcNAc...) asparagine glycosylation is found at N38, N81, N104, N113, N221, N282, and N468. S616 (charge relay system) is an active-site residue. N668 is a glycosylation site (N-linked (GlcNAc...) asparagine). Active-site charge relay system residues include D693 and H728.

This sequence belongs to the peptidase S9B family.

It is found in the secreted. It carries out the reaction Release of an N-terminal dipeptide, Xaa-Yaa-|-Zaa-, from a polypeptide, preferentially when Yaa is Pro, provided Zaa is neither Pro nor hydroxyproline.. In terms of biological role, extracellular dipeptidyl-peptidase which removes N-terminal dipeptides sequentially from polypeptides having unsubstituted N-termini provided that the penultimate residue is proline. This Aspergillus clavatus (strain ATCC 1007 / CBS 513.65 / DSM 816 / NCTC 3887 / NRRL 1 / QM 1276 / 107) protein is Probable dipeptidyl peptidase 4 (dpp4).